A 416-amino-acid polypeptide reads, in one-letter code: Serine hydroxymethyltransferase (416 aa).

Residues Leu-118 and 122–124 (GHL) each bind (6S)-5,6,7,8-tetrahydrofolate. Lys-226 bears the N6-(pyridoxal phosphate)lysine mark. Position 242 (Glu-242) interacts with (6S)-5,6,7,8-tetrahydrofolate.

This sequence belongs to the SHMT family. Homodimer. It depends on pyridoxal 5'-phosphate as a cofactor.

It localises to the cytoplasm. The catalysed reaction is (6R)-5,10-methylene-5,6,7,8-tetrahydrofolate + glycine + H2O = (6S)-5,6,7,8-tetrahydrofolate + L-serine. The protein operates within one-carbon metabolism; tetrahydrofolate interconversion. Its pathway is amino-acid biosynthesis; glycine biosynthesis; glycine from L-serine: step 1/1. Functionally, catalyzes the reversible interconversion of serine and glycine with tetrahydrofolate (THF) serving as the one-carbon carrier. This reaction serves as the major source of one-carbon groups required for the biosynthesis of purines, thymidylate, methionine, and other important biomolecules. Also exhibits THF-independent aldolase activity toward beta-hydroxyamino acids, producing glycine and aldehydes, via a retro-aldol mechanism. The chain is Serine hydroxymethyltransferase from Helicobacter pylori (strain J99 / ATCC 700824) (Campylobacter pylori J99).